The chain runs to 142 residues: Glia maturation factor beta (142 aa).

Serine 2 bears the N-acetylserine mark. The ADF-H domain maps to serine 4–glycine 139.

Belongs to the actin-binding proteins ADF family. GMF subfamily. In terms of processing, phosphorylated; stimulated by phorbol ester.

Its function is as follows. This protein causes differentiation of brain cells, stimulation of neural regeneration, and inhibition of proliferation of tumor cells. This Mus musculus (Mouse) protein is Glia maturation factor beta (Gmfb).